The following is a 193-amino-acid chain: Putative manganese efflux pump MntP (193 aa).

Transmembrane regions (helical) follow at residues 3–23, 39–59, 65–85, 113–133, 138–158, and 173–193; these read LATL…AALG, VGAY…ALGL, IAAF…GHMV, LALA…GLAV, ILMA…GGVL, and VLGG…HLSA.

This sequence belongs to the MntP (TC 9.B.29) family.

The protein localises to the cell inner membrane. Functionally, probably functions as a manganese efflux pump. In Rhodospirillum rubrum (strain ATCC 11170 / ATH 1.1.1 / DSM 467 / LMG 4362 / NCIMB 8255 / S1), this protein is Putative manganese efflux pump MntP.